The chain runs to 588 residues: Aspartate--tRNA(Asp/Asn) ligase (588 aa).

Glutamate 172 serves as a coordination point for L-aspartate. The interval 196–199 (QLFK) is aspartate. Residue arginine 218 participates in L-aspartate binding. ATP contacts are provided by residues 218–220 (RDE) and glutamine 227. L-aspartate is bound at residue histidine 450. Glutamate 484 is a binding site for ATP. Position 491 (arginine 491) interacts with L-aspartate. 536–539 (GLDR) provides a ligand contact to ATP.

The protein belongs to the class-II aminoacyl-tRNA synthetase family. Type 1 subfamily. As to quaternary structure, homodimer.

Its subcellular location is the cytoplasm. It catalyses the reaction tRNA(Asx) + L-aspartate + ATP = L-aspartyl-tRNA(Asx) + AMP + diphosphate. Functionally, aspartyl-tRNA synthetase with relaxed tRNA specificity since it is able to aspartylate not only its cognate tRNA(Asp) but also tRNA(Asn). Reaction proceeds in two steps: L-aspartate is first activated by ATP to form Asp-AMP and then transferred to the acceptor end of tRNA(Asp/Asn). In Nitrosospira multiformis (strain ATCC 25196 / NCIMB 11849 / C 71), this protein is Aspartate--tRNA(Asp/Asn) ligase.